Consider the following 320-residue polypeptide: Minor outer capsid protein P9 (320 aa).

The segment at 297–320 (RNDDEEELAGSEFTSLLSDDGRMG) is disordered.

Belongs to the phytoreovirus minor outer capsid protein P9 family.

It is found in the virion. The protein resides in the host cytoplasm. Functionally, minor outer capsid protein. The polypeptide is Minor outer capsid protein P9 (Rice gall dwarf virus (RGDV)).